Consider the following 570-residue polypeptide: Small ribosomal subunit protein bS1 (570 aa).

6 S1 motif domains span residues 52–116 (GAIL…LSRE), 134–199 (GSIV…VSRR), 220–288 (GERR…LGLK), 305–375 (GKRV…LGLK), 392–462 (GLRV…LGVK), and 479–548 (GSDI…LSIK).

The protein belongs to the bacterial ribosomal protein bS1 family.

Functionally, binds mRNA; thus facilitating recognition of the initiation point. It is needed to translate mRNA with a short Shine-Dalgarno (SD) purine-rich sequence. This is Small ribosomal subunit protein bS1 (rpsA) from Chlamydia muridarum (strain MoPn / Nigg).